A 139-amino-acid chain; its full sequence is ATP synthase epsilon chain (139 aa).

Belongs to the ATPase epsilon chain family. As to quaternary structure, F-type ATPases have 2 components, CF(1) - the catalytic core - and CF(0) - the membrane proton channel. CF(1) has five subunits: alpha(3), beta(3), gamma(1), delta(1), epsilon(1). CF(0) has three main subunits: a, b and c.

It localises to the cell inner membrane. In terms of biological role, produces ATP from ADP in the presence of a proton gradient across the membrane. This chain is ATP synthase epsilon chain, found in Serratia proteamaculans (strain 568).